The chain runs to 1700 residues: Rho guanine nucleotide exchange factor 28 (1700 aa).

Residues 288–335 (TERATMPSGAAETEEEVRNLESGRSPSEEEEDGQLVKSQADGPSEQED) are disordered. 3 positions are modified to phosphoserine: S312, S314, and S478. The disordered stretch occupies residues 483–525 (VADSEEEGRSEPPICYAVGSQSSPRTGLPGGDELDSFDANTEP). Position 623 is a phosphoserine (S623). Residues 651 to 698 (RHQFVPGTFSGVLQCSGCDKTLLGKESLQCANCKANTHKGCKDTVPPC) form a Phorbol-ester/DAG-type zinc finger. Over residues 709–720 (NKPQTILGSSSV) the composition is skewed to polar residues. 2 disordered regions span residues 709-761 (NKPQ…VPGT) and 774-799 (ESEG…GSSP). Over residues 728 to 737 (LSLHPSPSMP) the composition is skewed to low complexity. A compositionally biased stretch (polar residues) spans 774–783 (ESEGDSNSWR). Positions 848-1043 (KRQDVIFELM…KDMIAAVDLK (196 aa)) constitute a DH domain. The PH domain maps to 1085-1187 (ALLHDGLVYW…WMRRIQQAVE (103 aa)). Residues 1186-1207 (VESCPEEEGGRTSESDEERRKA) form a disordered region. The segment covering 1193–1207 (EGGRTSESDEERRKA) has biased composition (basic and acidic residues). Residues 1294 to 1303 (DVSQPSEEGP) form an interaction with PTK2/FAK1; required for regulation of axonal branching and synapse formation region. The tract at residues 1369–1380 (IIQAIQNLTRLL) is mediates cytoplasmic retention and interaction with YWHAH. Positions 1421-1700 (QEKSRYLEKH…DGAEENIVYL (280 aa)) are interaction with microtubules. Residues 1473-1522 (ERECQSQEELLLRHRSELDHQLQEYQQNLERLREGQRMVERERQRMRDQQ) adopt a coiled-coil conformation. The segment at 1493-1524 (QLQEYQQNLERLREGQRMVERERQRMRDQQGL) is RNA-binding. Position 1535 is a phosphoserine (S1535). The interval 1563–1576 (FLNDAFTHMSLNTS) is mediates cytoplasmic retention and interaction with MAPK8IP1. A disordered region spans residues 1574–1598 (NTSNKPNPSGAPWDAHPPGGSHLDL). S1604 carries the post-translational modification Phosphoserine. Residues 1612 to 1700 (VSQPSDVNSE…DGAEENIVYL (89 aa)) are disordered. Residues 1613–1623 (SQPSDVNSELW) show a composition bias toward polar residues. Residues 1633-1642 (ARQESIKDSC) are compositionally biased toward basic and acidic residues. The segment covering 1647 to 1672 (DLNSFQTESPDPQDSNQRGPQPQTLI) has biased composition (polar residues).

In terms of assembly, homooligomer; forms cytoplasmic aggregates. Forms a complex with MAPK8 and MAPK8IP1. Interacts with RHOA. Interacts with microtubules. Interacts with YWHAE and YWHAH. Interacts with PTK2/FAK1. Interacts with NEFL. Interacts with CTNND2; prevents interaction with RHOA. Phosphorylated on tyrosine upon stimulation of cells by laminin.

The protein resides in the cytoplasm. It localises to the cell membrane. Functionally, functions as a RHOA-specific guanine nucleotide exchange factor regulating signaling pathways downstream of integrins and growth factor receptors. Functions in axonal branching, synapse formation and dendritic morphogenesis. Also functions in focal adhesion formation, cell motility and B-lymphocytes activation. May regulate NEFL expression and aggregation and play a role in apoptosis. The protein is Rho guanine nucleotide exchange factor 28 (Arhgef28) of Rattus norvegicus (Rat).